A 367-amino-acid chain; its full sequence is Dual specificity protein phosphatase 1 (367 aa).

The Rhodanese domain occupies 20–137; it reads GAAQCLLLDC…FSASCPELCS (118 aa). A Tyrosine-protein phosphatase domain is found at 173-314; that stretch reads GPVEILSFLY…LLQFESQVLA (142 aa). Cys-258 functions as the Phosphocysteine intermediate in the catalytic mechanism. A phosphoserine; by MAPK1 and MAPK3 mark is found at Ser-359 and Ser-364.

It belongs to the protein-tyrosine phosphatase family. Non-receptor class dual specificity subfamily. Post-translationally, phosphorylation at Ser-359 and Ser-364 by MAPK1/ERK2 and MAPK3/ERK1 reduces its rate of degradation. 'Lys-48'-linked polyubiquitinated by NEURL3, leading to proteasomal degradation.

It localises to the nucleus. The catalysed reaction is O-phospho-L-tyrosyl-[protein] + H2O = L-tyrosyl-[protein] + phosphate. The enzyme catalyses O-phospho-L-seryl-[protein] + H2O = L-seryl-[protein] + phosphate. It catalyses the reaction O-phospho-L-threonyl-[protein] + H2O = L-threonyl-[protein] + phosphate. In terms of biological role, dual specificity phosphatase that dephosphorylates MAP kinase MAPK1/ERK2 on both 'Thr-183' and 'Tyr-185', regulating its activity during the meiotic cell cycle. This chain is Dual specificity protein phosphatase 1, found in Mus musculus (Mouse).